Reading from the N-terminus, the 556-residue chain is Fiber protein (556 aa).

The segment at 1 to 22 (MKRSRTQYAEEPEENDDFNPVY) is disordered.

It belongs to the adenoviridae fiber family. In terms of assembly, homotrimer. Interacts with host receptor CXCAR. Interacts (via N-terminal tail region) with pentons.

It is found in the virion. The protein localises to the host nucleus. Forms spikes that protrude from each vertex of the icosahedral capsid. Interacts with host receptor CXCAR to provide virion initial attachment to target cell. Fiber proteins are shed during virus entry, when virus is still at the cell surface. The chain is Fiber protein from Human adenovirus A serotype 31 (HAdV-31).